The following is a 342-amino-acid chain: Nicotinate-nucleotide--dimethylbenzimidazole phosphoribosyltransferase (342 aa).

The active-site Proton acceptor is the Glu-311.

Belongs to the CobT family.

The catalysed reaction is 5,6-dimethylbenzimidazole + nicotinate beta-D-ribonucleotide = alpha-ribazole 5'-phosphate + nicotinate + H(+). It functions in the pathway nucleoside biosynthesis; alpha-ribazole biosynthesis; alpha-ribazole from 5,6-dimethylbenzimidazole: step 1/2. Functionally, catalyzes the synthesis of alpha-ribazole-5'-phosphate from nicotinate mononucleotide (NAMN) and 5,6-dimethylbenzimidazole (DMB). The chain is Nicotinate-nucleotide--dimethylbenzimidazole phosphoribosyltransferase from Vibrio atlanticus (strain LGP32) (Vibrio splendidus (strain Mel32)).